Here is a 2839-residue protein sequence, read N- to C-terminus: Neurofibromin (2839 aa).

Ala-2 is subject to N-acetylalanine. 2 positions are modified to phosphoserine: Ser-864 and Ser-876. One can recognise a Ras-GAP domain in the interval 1251–1482 (HLLYQLLWNM…DAARRFFLDI (232 aa)). The CRAL-TRIO domain maps to 1580–1738 (EKEEFKALKT…ATLALEEDLK (159 aa)). The segment at 1580–1837 (EKEEFKALKT…RTRWELSQPD (258 aa)) is lipid binding. Residues Ser-2188 and Ser-2467 each carry the phosphoserine modification. Thr-2514 is modified (phosphothreonine). A phosphoserine mark is found at Ser-2515, Ser-2521, Ser-2523, and Ser-2543. Residues 2555-2571 (KRQEMESGITTPPKMRR) carry the Bipartite nuclear localization signal motif. Position 2565 is a phosphothreonine (Thr-2565). Phosphoserine is present on residues Ser-2597, Ser-2802, and Ser-2817. Residues 2787–2839 (TSQHSPGIDKENVELSPTTGHCNSGRTRHGSASQVQKQRSAGSFKRNSIKKIV) are disordered. A compositionally biased stretch (polar residues) spans 2801–2827 (LSPTTGHCNSGRTRHGSASQVQKQRSA).

In terms of assembly, interacts with HTR6. Interacts with SPRED2. Post-translationally, ubiquitinated by RNF7/RBX2, leading to its degradation. In terms of tissue distribution, detected in brain, peripheral nerve, lung, colon and muscle.

Its subcellular location is the nucleus. The protein resides in the nucleolus. It localises to the cell membrane. In terms of biological role, stimulates the GTPase activity of Ras. NF1 shows greater affinity for Ras GAP, but lower specific activity. May be a regulator of Ras activity. The chain is Neurofibromin (NF1) from Homo sapiens (Human).